The following is a 420-amino-acid chain: PHO85 cyclin-6 (420 aa).

Disordered regions lie at residues 1–82 (MSIK…ESSF), 134–155 (QGTH…DTSN), and 268–321 (VTTT…GVQR). Residues 7–22 (SPSSTNASSSPKSTYS) show a composition bias toward low complexity. Ser-61 is subject to Phosphoserine. Over residues 134 to 143 (QGTHTVQSST) the composition is skewed to polar residues. Basic and acidic residues predominate over residues 277–296 (AKHESPSNESSLDKANRGAD). 2 positions are modified to phosphoserine: Ser-281 and Ser-312. The segment covering 307–316 (NENDDSDDEN) has biased composition (acidic residues). Phosphothreonine is present on Thr-317.

It belongs to the cyclin family. PHO80 subfamily. Forms a cyclin-CDK complex with PHO85. Interacts with the substrate protein YJL084C. Interacts with elongin-C, which stabilizes PCL6. Interacts with the CDK inhibitor (CKI) PHO81.

It is found in the cytoplasm. It localises to the nucleus. Cyclin partner of the cyclin-dependent kinase (CDK) PHO85. Together with cyclin PCL7, controls glycogen phosphorylase and glycogen synthase activities in response to nutrient availablility. The PCL6-PHO85 cyclin-CDK holoenzyme has GLC8 kinase activity and phosphorylates and inactivates the phosphatase PP1-2 inhibitor GLC8, causing activation of PP1-2, which then dephosphorylates and activates glycogen phosphorylase. PCL6-PHO85 also phosphorylates YJL084C. The protein is PHO85 cyclin-6 (PCL6) of Saccharomyces cerevisiae (strain ATCC 204508 / S288c) (Baker's yeast).